Consider the following 331-residue polypeptide: UPF0284 protein PF0303 (331 aa).

This sequence belongs to the UPF0284 family.

This chain is UPF0284 protein PF0303, found in Pyrococcus furiosus (strain ATCC 43587 / DSM 3638 / JCM 8422 / Vc1).